We begin with the raw amino-acid sequence, 309 residues long: Olfactory receptor 1A1 (309 aa).

At 1-25 (MRENNQSSTLEFILLGVTGQQEQED) the chain is on the extracellular side. N-linked (GlcNAc...) asparagine glycosylation is present at Asn-5. Residues 26-49 (FFYILFLFIYPITLIGNLLIVLAI) traverse the membrane as a helical segment. Topologically, residues 50-57 (CSDVHLHN) are cytoplasmic. The chain crosses the membrane as a helical span at residues 58–79 (PMYFLLANLSLVDIFFSSVTIP). Residues 80–100 (KMLANHLSGSKSISFGGCLTQ) are Extracellular-facing. A disulfide bridge links Cys-97 with Cys-189. Residues 101-120 (MYFMIDLGNTDSYTLAAMAY) form a helical membrane-spanning segment. At 121–139 (DRAVAISRPLHYTTIMSPR) the chain is on the cytoplasmic side. A helical transmembrane segment spans residues 140–158 (SCIWLIAGSWVIGNANALP). The Extracellular portion of the chain corresponds to 159 to 195 (HTLLTASLSFCGNQEVANFYCDITPLLKLSCSDIHFH). The chain crosses the membrane as a helical span at residues 196–218 (VKMMYLGVGIFSVPLLCIIVSYI). At 219-235 (RVFSTVFQVPSTKGVLK) the chain is on the cytoplasmic side. A helical transmembrane segment spans residues 236–258 (AFSTCGSHLTVVSLYYGTVMGMY). At 259-270 (FRPLTNYSLKDA) the chain is on the extracellular side. Residue Asn-264 is glycosylated (N-linked (GlcNAc...) asparagine). The chain crosses the membrane as a helical span at residues 271–290 (VITVMCTAVTPMLNPFIYSL). At 291–309 (RNRDMKAALQKLFNKRISS) the chain is on the cytoplasmic side.

It belongs to the G-protein coupled receptor 1 family.

It is found in the cell membrane. Functionally, odorant receptor. This Gorilla gorilla gorilla (Western lowland gorilla) protein is Olfactory receptor 1A1 (OR1A1).